A 210-amino-acid chain; its full sequence is Large ribosomal subunit protein uL3 (210 aa).

This sequence belongs to the universal ribosomal protein uL3 family. Part of the 50S ribosomal subunit. Forms a cluster with proteins L14 and L19.

Its function is as follows. One of the primary rRNA binding proteins, it binds directly near the 3'-end of the 23S rRNA, where it nucleates assembly of the 50S subunit. This Geobacter metallireducens (strain ATCC 53774 / DSM 7210 / GS-15) protein is Large ribosomal subunit protein uL3.